A 268-amino-acid polypeptide reads, in one-letter code: Tryptophan synthase alpha chain (268 aa).

Active-site proton acceptor residues include Glu-49 and Asp-60.

Belongs to the TrpA family. Tetramer of two alpha and two beta chains.

The enzyme catalyses (1S,2R)-1-C-(indol-3-yl)glycerol 3-phosphate + L-serine = D-glyceraldehyde 3-phosphate + L-tryptophan + H2O. It functions in the pathway amino-acid biosynthesis; L-tryptophan biosynthesis; L-tryptophan from chorismate: step 5/5. The alpha subunit is responsible for the aldol cleavage of indoleglycerol phosphate to indole and glyceraldehyde 3-phosphate. The protein is Tryptophan synthase alpha chain of Yersinia pestis bv. Antiqua (strain Antiqua).